The primary structure comprises 104 residues: Flagellar hook-basal body complex protein FliE (104 aa).

This sequence belongs to the FliE family.

It localises to the bacterial flagellum basal body. This Serratia proteamaculans (strain 568) protein is Flagellar hook-basal body complex protein FliE.